The primary structure comprises 229 residues: Ribose-5-phosphate isomerase A (229 aa).

Substrate is bound by residues 28 to 31, 84 to 87, and 97 to 100; these read TGST, DGAD, and KGGG. Glu106 acts as the Proton acceptor in catalysis. Residue Lys124 participates in substrate binding.

It belongs to the ribose 5-phosphate isomerase family. Homodimer.

It catalyses the reaction aldehydo-D-ribose 5-phosphate = D-ribulose 5-phosphate. It functions in the pathway carbohydrate degradation; pentose phosphate pathway; D-ribose 5-phosphate from D-ribulose 5-phosphate (non-oxidative stage): step 1/1. Its function is as follows. Catalyzes the reversible conversion of ribose-5-phosphate to ribulose 5-phosphate. This chain is Ribose-5-phosphate isomerase A, found in Lacticaseibacillus paracasei (strain ATCC 334 / BCRC 17002 / CCUG 31169 / CIP 107868 / KCTC 3260 / NRRL B-441) (Lactobacillus paracasei).